A 106-amino-acid polypeptide reads, in one-letter code: Small ribosomal subunit protein uS10 (106 aa).

This sequence belongs to the universal ribosomal protein uS10 family. In terms of assembly, part of the 30S ribosomal subunit.

Functionally, involved in the binding of tRNA to the ribosomes. This Prochlorococcus marinus (strain MIT 9515) protein is Small ribosomal subunit protein uS10.